We begin with the raw amino-acid sequence, 98 residues long: uncharacterized protein (98 aa).

This is an uncharacterized protein from Bacillus subtilis (strain 168).